Consider the following 158-residue polypeptide: Transcription elongation factor GreA (158 aa).

Positions 47 to 74 (AEYHAAKEEQSHNEGRIAELEDKLARAD) form a coiled coil.

Belongs to the GreA/GreB family.

In terms of biological role, necessary for efficient RNA polymerase transcription elongation past template-encoded arresting sites. The arresting sites in DNA have the property of trapping a certain fraction of elongating RNA polymerases that pass through, resulting in locked ternary complexes. Cleavage of the nascent transcript by cleavage factors such as GreA or GreB allows the resumption of elongation from the new 3'terminus. GreA releases sequences of 2 to 3 nucleotides. This chain is Transcription elongation factor GreA, found in Nitrobacter winogradskyi (strain ATCC 25391 / DSM 10237 / CIP 104748 / NCIMB 11846 / Nb-255).